A 91-amino-acid polypeptide reads, in one-letter code: MSRTIFCTFLQREADGQDFQLYPGELGKRIYNEISKEAWAQWQHKQTMLINEKKLSMMNPEHRKLLEQEMVQFLFEGKDVHIEGYTPPEKQ.

It belongs to the Fe(2+)-trafficking protein family. As to quaternary structure, monomer.

Functionally, could be a mediator in iron transactions between iron acquisition and iron-requiring processes, such as synthesis and/or repair of Fe-S clusters in biosynthetic enzymes. The protein is Probable Fe(2+)-trafficking protein of Klebsiella pneumoniae subsp. pneumoniae (strain ATCC 700721 / MGH 78578).